The primary structure comprises 156 residues: Arginine repressor (156 aa).

The protein belongs to the ArgR family.

Its subcellular location is the cytoplasm. It participates in amino-acid biosynthesis; L-arginine biosynthesis [regulation]. Regulates arginine biosynthesis genes. The polypeptide is Arginine repressor (Shewanella pealeana (strain ATCC 700345 / ANG-SQ1)).